Reading from the N-terminus, the 182-residue chain is Fatty-acid and retinol-binding protein 1 (182 aa).

An N-terminal signal peptide occupies residues 1–17; the sequence is MIRATIILAAVAALAFS. A coiled-coil region spans residues 86-106; sequence EKASKLHQIVKDKVNALNDEA.

The protein belongs to the fatty-acid and retinol-binding protein (FARBP) family.

Its subcellular location is the secreted. Its function is as follows. Probably binds lipids. The chain is Fatty-acid and retinol-binding protein 1 (far-1) from Caenorhabditis elegans.